We begin with the raw amino-acid sequence, 199 residues long: Recombination protein RecR (199 aa).

A C4-type zinc finger spans residues C57–C72. Residues T80–P176 enclose the Toprim domain.

It belongs to the RecR family.

Functionally, may play a role in DNA repair. It seems to be involved in an RecBC-independent recombinational process of DNA repair. It may act with RecF and RecO. The chain is Recombination protein RecR from Exiguobacterium sp. (strain ATCC BAA-1283 / AT1b).